Reading from the N-terminus, the 416-residue chain is MKVVILGAGVIGVTSAWYLARAGHEVVVVDRQDGPALETSFANAGEISPGYASPWAAPGIPAKALRWLFMRHAPLIVRPGFDPAMVRWLVAMLGNCTARAYRVNKGRMVRLAEFSRDRLIELRQETGIRYDERSQGTLQLFRREKDLAGVAKDIEVLKADGVPFELLDAAGCIAAEPGLANSASPIAGGLRLPNDETGDCFKFTNALAELAKAEGVRFVLGRRIDAIVASGNRIAHVRTDRGDISGDAYLVALGSHSPLLLSPLGIRLPVYPVKGYSITVPIVDPARAPVSTLLDESFKVAITRLGDRIRVGGMAEISGYSNDLPPARRATLDHCVGSLFPDAGDLSQASFWTGLRPMTPDGTPVIGATGYRNLFLNTGHGTLGWTMACGSGHVIADIIGGKRPAIETGDLAIDRY.

Position 3–17 (Val3–Trp17) interacts with FAD.

It belongs to the DadA oxidoreductase family. Requires FAD as cofactor.

It carries out the reaction a D-alpha-amino acid + A + H2O = a 2-oxocarboxylate + AH2 + NH4(+). It functions in the pathway amino-acid degradation; D-alanine degradation; NH(3) and pyruvate from D-alanine: step 1/1. In terms of biological role, oxidative deamination of D-amino acids. This is D-amino acid dehydrogenase from Rhizorhabdus wittichii (strain DSM 6014 / CCUG 31198 / JCM 15750 / NBRC 105917 / EY 4224 / RW1) (Sphingomonas wittichii).